The chain runs to 359 residues: MPLSRLIINDFRNIETCDIQLSTGFNFVIGPNGSGKTSVLEAIYLLGHGRSFKSSLTGRIIRNSCDELFIHGRFTTPEQFELPIGINKQRDGTTEVKIGGESGQKLAQLAKVLPLQLIHPEGFELVTDGPKFRRAFIDWGVFHVEPAFYEAWSRVKRLTKQRNALLKTAQSYRELSYWDLELANLAEKIDQWRVDYINHISEATQQICQAFLPEYDIKLSYYRGWERETPYAELLKRNFERDKQLGYTVGGPNKADLRIKVAGTPVEDVLSRGQLKLMVCALRLAQGQHLTEATGKQCIYLIDDFASELDSHRRQLLAQYLKQTKAQVFISSITAEQIADMHDEESKMFEIEHGKIAQG.

ATP is bound at residue 30–37; it reads GPNGSGKT.

The protein belongs to the RecF family.

It localises to the cytoplasm. In terms of biological role, the RecF protein is involved in DNA metabolism; it is required for DNA replication and normal SOS inducibility. RecF binds preferentially to single-stranded, linear DNA. It also seems to bind ATP. In Aliivibrio salmonicida (strain LFI1238) (Vibrio salmonicida (strain LFI1238)), this protein is DNA replication and repair protein RecF.